We begin with the raw amino-acid sequence, 161 residues long: 2-C-methyl-D-erythritol 2,4-cyclodiphosphate synthase (161 aa).

A divalent metal cation contacts are provided by aspartate 11 and histidine 13. Residues 11–13 (DIH) and 37–38 (HS) each bind 4-CDP-2-C-methyl-D-erythritol 2-phosphate. Histidine 45 serves as a coordination point for a divalent metal cation. 4-CDP-2-C-methyl-D-erythritol 2-phosphate is bound by residues 59–61 (DIG) and 135–138 (TTNE).

This sequence belongs to the IspF family. Homotrimer. A divalent metal cation serves as cofactor.

The enzyme catalyses 4-CDP-2-C-methyl-D-erythritol 2-phosphate = 2-C-methyl-D-erythritol 2,4-cyclic diphosphate + CMP. It participates in isoprenoid biosynthesis; isopentenyl diphosphate biosynthesis via DXP pathway; isopentenyl diphosphate from 1-deoxy-D-xylulose 5-phosphate: step 4/6. In terms of biological role, involved in the biosynthesis of isopentenyl diphosphate (IPP) and dimethylallyl diphosphate (DMAPP), two major building blocks of isoprenoid compounds. Catalyzes the conversion of 4-diphosphocytidyl-2-C-methyl-D-erythritol 2-phosphate (CDP-ME2P) to 2-C-methyl-D-erythritol 2,4-cyclodiphosphate (ME-CPP) with a corresponding release of cytidine 5-monophosphate (CMP). This is 2-C-methyl-D-erythritol 2,4-cyclodiphosphate synthase from Acaryochloris marina (strain MBIC 11017).